The chain runs to 221 residues: 7-cyano-7-deazaguanine synthase (221 aa).

Position 10–20 (10–20 (FSGGQDSTTCL)) interacts with ATP. Zn(2+) is bound by residues cysteine 187, cysteine 196, cysteine 199, and cysteine 202.

It belongs to the QueC family. In terms of assembly, homodimer. The cofactor is Zn(2+).

The catalysed reaction is 7-carboxy-7-deazaguanine + NH4(+) + ATP = 7-cyano-7-deazaguanine + ADP + phosphate + H2O + H(+). Its pathway is purine metabolism; 7-cyano-7-deazaguanine biosynthesis. Functionally, catalyzes the ATP-dependent conversion of 7-carboxy-7-deazaguanine (CDG) to 7-cyano-7-deazaguanine (preQ(0)). The sequence is that of 7-cyano-7-deazaguanine synthase from Shouchella clausii (strain KSM-K16) (Alkalihalobacillus clausii).